The following is a 158-amino-acid chain: MSQSSRLCSGYYSLNRSFVEPFQCPQRGDGAALLYCCGFADLKYCCSEPGSYFPYKHSYMWSLSIGALVGLGIAALVLLAFVISVCVLCYLFLYTKPQRLDNGLKLQHLETSSTLEGNINRKAKGLNAVSNSTNETFYEADDGTQEKTMDITQINIAC.

The helical transmembrane segment at 65–85 (IGALVGLGIAALVLLAFVISV) threads the bilayer.

This sequence belongs to the shisa family.

The protein localises to the membrane. The protein is Protein shisa-like-2B (Shisal2b) of Mus musculus (Mouse).